Reading from the N-terminus, the 368-residue chain is Chaperone protein DnaJ (368 aa).

In terms of domain architecture, J spans 5-69 (DYYEVLGLDK…QKRAQYDRFG (65 aa)). Residues 126 to 208 (GKTETIELEI…CHGSGHVKKK (83 aa)) form a CR-type zinc finger. Zn(2+) contacts are provided by Cys139, Cys142, Cys156, Cys159, Cys182, Cys185, Cys196, and Cys199. CXXCXGXG motif repeat units lie at residues 139 to 146 (CDTCMGSG), 156 to 163 (CNRCGGSG), 182 to 189 (CSQCHGSG), and 196 to 203 (CPTCHGSG).

This sequence belongs to the DnaJ family. As to quaternary structure, homodimer. The cofactor is Zn(2+).

The protein resides in the cytoplasm. In terms of biological role, participates actively in the response to hyperosmotic and heat shock by preventing the aggregation of stress-denatured proteins and by disaggregating proteins, also in an autonomous, DnaK-independent fashion. Unfolded proteins bind initially to DnaJ; upon interaction with the DnaJ-bound protein, DnaK hydrolyzes its bound ATP, resulting in the formation of a stable complex. GrpE releases ADP from DnaK; ATP binding to DnaK triggers the release of the substrate protein, thus completing the reaction cycle. Several rounds of ATP-dependent interactions between DnaJ, DnaK and GrpE are required for fully efficient folding. Also involved, together with DnaK and GrpE, in the DNA replication of plasmids through activation of initiation proteins. The protein is Chaperone protein DnaJ of Exiguobacterium sp. (strain ATCC BAA-1283 / AT1b).